We begin with the raw amino-acid sequence, 391 residues long: Phosphoglycerate kinase (391 aa).

Residues 21 to 23 (DLN), arginine 36, 59 to 62 (HLGR), arginine 113, and arginine 146 each bind substrate. Residues lysine 197, glutamate 319, and 345–348 (GGDT) each bind ATP.

It belongs to the phosphoglycerate kinase family. In terms of assembly, monomer.

It localises to the cytoplasm. The enzyme catalyses (2R)-3-phosphoglycerate + ATP = (2R)-3-phospho-glyceroyl phosphate + ADP. Its pathway is carbohydrate degradation; glycolysis; pyruvate from D-glyceraldehyde 3-phosphate: step 2/5. This Xanthomonas oryzae pv. oryzae (strain MAFF 311018) protein is Phosphoglycerate kinase.